Reading from the N-terminus, the 319-residue chain is Tryptophan--tRNA ligase (319 aa).

ATP-binding positions include 8–10 (QPS) and 16–17 (GN). Positions 9–17 (PSGDLHIGN) match the 'HIGH' region motif. Residue Asp-131 coordinates L-tryptophan. ATP-binding positions include 143 to 145 (GKD), Val-182, and 189 to 193 (KMSKS). The 'KMSKS' region signature appears at 189-193 (KMSKS).

Belongs to the class-I aminoacyl-tRNA synthetase family. As to quaternary structure, homodimer.

The protein localises to the cytoplasm. The catalysed reaction is tRNA(Trp) + L-tryptophan + ATP = L-tryptophyl-tRNA(Trp) + AMP + diphosphate + H(+). In terms of biological role, catalyzes the attachment of tryptophan to tRNA(Trp). This chain is Tryptophan--tRNA ligase, found in Campylobacter jejuni subsp. jejuni serotype O:2 (strain ATCC 700819 / NCTC 11168).